The primary structure comprises 361 residues: ATP-dependent 6-phosphofructokinase 1 (361 aa).

ATP is bound by residues Gly-14, Lys-79–Gly-80, and Gly-116–Ser-119. Residue Asp-117 participates in Mg(2+) binding. Substrate contacts are provided by residues Thr-140 to Asp-142, Arg-177, Met-184 to Arg-186, Glu-237, Arg-278, and His-284 to Arg-287. Asp-142 acts as the Proton acceptor in catalysis.

It belongs to the phosphofructokinase type A (PFKA) family. Mixed-substrate PFK group III subfamily. As to quaternary structure, homodimer or homotetramer. It depends on Mg(2+) as a cofactor.

It is found in the cytoplasm. The enzyme catalyses beta-D-fructose 6-phosphate + ATP = beta-D-fructose 1,6-bisphosphate + ADP + H(+). It functions in the pathway carbohydrate degradation; glycolysis; D-glyceraldehyde 3-phosphate and glycerone phosphate from D-glucose: step 3/4. In terms of biological role, catalyzes the phosphorylation of D-fructose 6-phosphate to fructose 1,6-bisphosphate by ATP, the first committing step of glycolysis. The chain is ATP-dependent 6-phosphofructokinase 1 from Synechocystis sp. (strain ATCC 27184 / PCC 6803 / Kazusa).